We begin with the raw amino-acid sequence, 459 residues long: Proton-coupled folate transporter (459 aa).

N-acetylmethionine is present on methionine 1. The Cytoplasmic portion of the chain corresponds to 1 to 25; sequence MEGRVSPVGSSHRLLTAAVLFRGPV. Serine 6 carries the post-translational modification Phosphoserine. Residues 26–44 traverse the membrane as a helical segment; the sequence is EPLVFLANFALVLQGPLTT. At 45–82 the chain is on the extracellular side; the sequence is QYIWHRISTELGYNGTRHRENCGNQSADPVLKEVETLT. N-linked (GlcNAc...) asparagine glycans are attached at residues asparagine 58 and asparagine 68. Residues cysteine 66 and cysteine 298 are joined by a disulfide bond. The chain crosses the membrane as a helical span at residues 83–108; the sequence is SHWTLYMNVGGFLVGLFWSTLLGAWS. The Cytoplasmic portion of the chain corresponds to 109-112; it reads DRVG. The chain crosses the membrane as a helical span at residues 113-135; that stretch reads RRPLLVLASLGLLLQAVVSIFVV. At 136–140 the chain is on the extracellular side; the sequence is QLQLH. Residues 141-154 form a helical membrane-spanning segment; that stretch reads IGFFVLGRALCALL. At 155-177 the chain is on the cytoplasmic side; it reads GDFNGLLAASFASVADVSSNHSR. H(+)-binding residues include aspartate 156 and glutamate 185. Residues 178-203 traverse the membrane as a helical segment; that stretch reads TFRMALLEACIGVAGTLASLLGGHWL. The Extracellular portion of the chain corresponds to 204 to 208; it reads RAQGY. A helical membrane pass occupies residues 209–227; it reads ANPFWLALAVLIVMTLYAA. Residues 228-266 are Cytoplasmic-facing; it reads FCFGETVKEPKSTRLFTLRHHRSIVQLYVVPAPEKSRMH. Residues 267-289 form a helical membrane-spanning segment; that stretch reads LALYSLAIFVVVTVHFGAQDILT. Position 281 (histidine 281) interacts with H(+). Residues 290 to 302 lie on the Extracellular side of the membrane; sequence LYELSTPLCWDSK. Residues 303–325 traverse the membrane as a helical segment; that stretch reads LIGYGSAAQHLPYLTSLLGLRLL. Over 326 to 331 the chain is Cytoplasmic; that stretch reads QFCLAD. Residues 332 to 351 form a helical membrane-spanning segment; sequence TWVAEIGLAFNILGMVVFAF. Over 352–355 the chain is Extracellular; it reads ATIT. A helical transmembrane segment spans residues 356-376; the sequence is PLMFTGYGLLFLSLVTTPVIR. The Cytoplasmic portion of the chain corresponds to 377–388; sequence AKLSKLVSESEQ. A helical membrane pass occupies residues 389-414; that stretch reads GALFSAVACVNSLAMLMASGIFNSLY. Topologically, residues 415 to 422 are extracellular; sequence PATLNFMK. A helical transmembrane segment spans residues 423 to 441; it reads GFPFLLGAGLLFIPAILIG. The Cytoplasmic segment spans residues 442–459; sequence VLEKVNPHPEFQQFPQNS.

It belongs to the major facilitator superfamily. SLC46A family. In terms of assembly, monomer. Expressed almost exclusively in the small intestine: expressed at high level in the upper half of the small intestine (duodenum and jejunum), expression decreases downwardly in the subsequent quarter and is undetectable in the last quarter (the lowest ileum). Expressed at low level in other tissues, including liver.

The protein resides in the cell membrane. It is found in the apical cell membrane. It localises to the basolateral cell membrane. The protein localises to the endosome membrane. Its subcellular location is the cytoplasm. The enzyme catalyses folate(in) + H(+)(in) = folate(out) + H(+)(out). It catalyses the reaction (6S)-5-methyl-5,6,7,8-tetrahydrofolate(in) + H(+)(in) = (6S)-5-methyl-5,6,7,8-tetrahydrofolate(out) + H(+)(out). The catalysed reaction is methotrexate(in) + H(+)(in) = methotrexate(out) + H(+)(out). It carries out the reaction pemetrexed(in) + H(+)(in) = pemetrexed(out) + H(+)(out). With respect to regulation, in contrast to human ortholog, not inhibited by myricetin. Proton-coupled folate symporter that mediates folate absorption using an H(+) gradient as a driving force. Involved in the intestinal absorption of folates at the brush-border membrane of the proximal jejunum, and the transport from blood to cerebrospinal fluid across the choroid plexus. Functions at acidic pH via alternate outward- and inward-open conformation states. Protonation of residues in the outward open state primes the protein for transport. Binding of folate promotes breaking of salt bridge network and subsequent closure of the extracellular gate, leading to the inward-open state and release of protons and folate. Also able to transport antifolate drugs, such as methotrexate and pemetrexed. Involved in FOLR1-mediated endocytosis by serving as a route of export of folates from acidified endosomes. Also acts as a lower-affinity, pH-independent heme carrier protein and constitutes the main importer of heme in the intestine. Imports heme in the retina and retinal pigment epithelium, in neurons of the hippocampus, in hepatocytes and in the renal epithelial cells. Hence, participates in the trafficking of heme and increases intracellular iron content. In Rattus norvegicus (Rat), this protein is Proton-coupled folate transporter.